A 544-amino-acid polypeptide reads, in one-letter code: Probable protein kinase UbiB (544 aa).

The Protein kinase domain maps to 123-500 (DFDEKALASA…RNKQRKSQYL (378 aa)). ATP contacts are provided by residues 129 to 137 (LASASIAQV) and Lys152. Asp286 functions as the Proton acceptor in the catalytic mechanism. 2 consecutive transmembrane segments (helical) span residues 499 to 519 (YLLG…ISAS) and 522 to 542 (MAIA…YKSG).

This sequence belongs to the ABC1 family. UbiB subfamily.

The protein resides in the cell inner membrane. It participates in cofactor biosynthesis; ubiquinone biosynthesis [regulation]. In terms of biological role, is probably a protein kinase regulator of UbiI activity which is involved in aerobic coenzyme Q (ubiquinone) biosynthesis. Required for the expression of 2'-N-acetyltransferase. This is Probable protein kinase UbiB from Providencia stuartii.